The chain runs to 539 residues: Chaperonin GroEL (539 aa).

ATP-binding positions include 29–32, 86–90, glycine 413, 476–478, and aspartate 492; these read TIGP, DGTTT, and NAA.

This sequence belongs to the chaperonin (HSP60) family. As to quaternary structure, forms a cylinder of 14 subunits composed of two heptameric rings stacked back-to-back. Interacts with the co-chaperonin GroES.

Its subcellular location is the cytoplasm. It carries out the reaction ATP + H2O + a folded polypeptide = ADP + phosphate + an unfolded polypeptide.. Together with its co-chaperonin GroES, plays an essential role in assisting protein folding. The GroEL-GroES system forms a nano-cage that allows encapsulation of the non-native substrate proteins and provides a physical environment optimized to promote and accelerate protein folding. This is Chaperonin GroEL from Staphylococcus epidermidis (strain ATCC 12228 / FDA PCI 1200).